Here is a 166-residue protein sequence, read N- to C-terminus: NAD(P)H-quinone oxidoreductase subunit I, chloroplastic (166 aa).

4Fe-4S ferredoxin-type domains lie at 55-84 and 95-124; these read GRIH…VDWK and LNYS…MTEE. 8 residues coordinate [4Fe-4S] cluster: C64, C67, C70, C74, C104, C107, C110, and C114.

The protein belongs to the complex I 23 kDa subunit family. NDH is composed of at least 16 different subunits, 5 of which are encoded in the nucleus. Requires [4Fe-4S] cluster as cofactor.

It localises to the plastid. It is found in the chloroplast thylakoid membrane. It carries out the reaction a plastoquinone + NADH + (n+1) H(+)(in) = a plastoquinol + NAD(+) + n H(+)(out). The catalysed reaction is a plastoquinone + NADPH + (n+1) H(+)(in) = a plastoquinol + NADP(+) + n H(+)(out). Functionally, NDH shuttles electrons from NAD(P)H:plastoquinone, via FMN and iron-sulfur (Fe-S) centers, to quinones in the photosynthetic chain and possibly in a chloroplast respiratory chain. The immediate electron acceptor for the enzyme in this species is believed to be plastoquinone. Couples the redox reaction to proton translocation, and thus conserves the redox energy in a proton gradient. This is NAD(P)H-quinone oxidoreductase subunit I, chloroplastic from Lactuca sativa (Garden lettuce).